The primary structure comprises 751 residues: Nibrin (751 aa).

The FHA domain maps to 24-83; that stretch reads YVVGRKNCGILIENDQSISRNHAVLTVNFPVTSLSQTDEIPTLTIKDNSKYGTFVNEEKM. BRCT domains are found at residues 105–181 and 224–315; these read KFRV…SEFL and GKTF…LAVI. Residues 111–328 are mediates interaction with SP100; that stretch reads EPLVVCSSCL…TENYCNPQGQ (218 aa). Residues 221–403 are interaction with MTOR, MAPKAP1 and RICTOR; sequence IFKGKTFVFL…SRKLSQETFN (183 aa). Thr-337 is subject to Phosphothreonine. Ser-343 bears the Phosphoserine; by ATM mark. 2 positions are modified to phosphoserine: Ser-347 and Ser-398. The segment at 389–418 is disordered; the sequence is GLEQSSRKLSQETFNIKEAPKPSSKANNVA. At Ser-433 the chain carries Phosphoserine; by CDK2. Residue Lys-436 forms a Glycyl lysine isopeptide (Lys-Gly) (interchain with G-Cter in ubiquitin) linkage. Disordered stretches follow at residues 444–479 and 491–550; these read KDWT…SSCK and EQTQ…RKRK. Polar residues predominate over residues 446–457; the sequence is WTSQQQQNSIKN. A Nuclear localization signal motif is present at residues 461 to 467; that stretch reads PCTRKRE. 2 stretches are compositionally biased toward basic and acidic residues: residues 502-518 and 528-539; these read KSKE…READ and ELNRKSPDRKPL. At Ser-508 the chain carries Phosphoserine. Residues Lys-569 and Lys-580 each participate in a glycyl lysine isopeptide (Lys-Gly) (interchain with G-Cter in SUMO2) cross-link. Positions 576–645 are disordered; sequence VKVEKQEADD…ANSDGLQDSS (70 aa). 2 stretches are compositionally biased toward basic and acidic residues: residues 577–599 and 615–636; these read KVEK…ERNR and EDER…HEIA. Residues Lys-684, Lys-688, and Lys-733 each participate in a glycyl lysine isopeptide (Lys-Gly) (interchain with G-Cter in ubiquitin) cross-link. A compositionally biased stretch (basic and acidic residues) spans 731–742; sequence QAKEESLADDLF. The disordered stretch occupies residues 731–751; that stretch reads QAKEESLADDLFRYNPNVKRR. The short motif at 738-747 is the FxF/Y motif element; it reads ADDLFRYNPN.

The protein belongs to the Nibrin family. In terms of assembly, component of the MRN complex composed of two heterodimers RAD50 and MRE11 associated with a single NBN. The MRN complexes dimerize on DNA to form joined MRN-MRN oligomers required for DNA double-strand break repair. As part of the MRN complex, interacts with MCM9; the interaction recruits the complex to DNA repair sites. Component of the BASC complex, at least composed of BRCA1, MSH2, MSH6, MLH1, ATM, BLM, RAD50, MRE11 and NBN. Interacts with histone H2AX; this requires phosphorylation of H2AX on 'Ser-139' and promotes NBN recruitment to DNA damage sites. Interacts with (phosphorylated) MDC1; promoting NBN recruitment to DNA damage sites. Interacts with (phosphorylated) RAD17; promoting NBN recruitment to DNA damage sites. Interacts (via FxF/Y motif) with ATM. Interacts with HJURP. Interacts with INTS3. Interacts with KPNA2. Interacts with TERF2; interaction is disrupted upon NBN phosphorylation by CDK2. Interacts with (phosphorylated) RBBP8/CtIP; the interaction links the role of the MRN complex in DNA double-strand break sensing to resection. Interacts with SP100; recruits NBN to PML bodies. Interacts with ATF2. Interacts with MTOR, MAPKAP1 isoform 2 and RICTOR; indicative for an association with the mTORC2 complex. Interacts with MRNIP. Interacts with UFL1; promoting UFL1 recruitment to double-strand breaks following DNA damage. Interacts with CYREN (via XLF motif). Ubiquitinated at Lys-436 via 'Lys-6'-linked ubiquitin chains by RNF8, promoting NBN recruitment to DNA double-strand breaks (DSBs). Ubiquitinated at Lys-684 and Lys-688 via 'Lys-63'-linked ubiquitin chains by PELI1: ubiquitination takes place following PELI1 phosphorylation and promotes ATM activation and DNA repair. Ubiquitinated at Lys-733 via 'Lys-63'-linked ubiquitin chains by the SCF(SKP2) complex: ubiquitination takes place following SKP2 phosphorylation and promotes ATM activation and DNA repair. In terms of processing, phosphorylated by ATM in response of ionizing radiation, and such phosphorylation is responsible intra-S phase checkpoint control and telomere maintenance. Phosphorylated at Ser-433 by CDK2 in S/G2 phases abolishes interaction with TERF2, enabling DCLRE1B/Apollo recruitment to telomeres. Phosphorylation at Ser-433 in response to dysfunctional telomeres promotes non-homologous end joining repair at telomeres, while dephosphorylation by PPP1CA promotes microhomology-mediated end-joining (MMEJ) repair. High expression in the liver, heart and testis. Low expression in all other tissues analyzed. In the cerebellum the postmitotic Purkinje cells are marked specifically.

The protein resides in the nucleus. The protein localises to the chromosome. Its subcellular location is the PML body. It localises to the telomere. Functionally, component of the MRN complex, which plays a central role in double-strand break (DSB) repair, DNA recombination, maintenance of telomere integrity and meiosis. The MRN complex is involved in the repair of DNA double-strand breaks (DSBs) via homologous recombination (HR), an error-free mechanism which primarily occurs during S and G2 phases. The complex (1) mediates the end resection of damaged DNA, which generates proper single-stranded DNA, a key initial steps in HR, and is (2) required for the recruitment of other repair factors and efficient activation of ATM and ATR upon DNA damage. The MRN complex possesses single-strand endonuclease activity and double-strand-specific 3'-5' exonuclease activity, which are provided by MRE11, to initiate end resection, which is required for single-strand invasion and recombination. Within the MRN complex, NBN acts as a protein-protein adapter, which specifically recognizes and binds phosphorylated proteins, promoting their recruitment to DNA damage sites. Recruits MRE11 and RAD50 components of the MRN complex to DSBs in response to DNA damage. Promotes the recruitment of PI3/PI4-kinase family members ATM, ATR, and probably DNA-PKcs to the DNA damage sites, activating their functions. Mediates the recruitment of phosphorylated RBBP8/CtIP to DSBs, leading to cooperation between the MRN complex and RBBP8/CtIP to initiate end resection. RBBP8/CtIP specifically promotes the endonuclease activity of the MRN complex to clear DNA ends containing protein adducts. The MRN complex is also required for the processing of R-loops. NBN also functions in telomere length maintenance via its interaction with TERF2: interaction with TERF2 during G1 phase preventing recruitment of DCLRE1B/Apollo to telomeres. NBN also promotes DNA repair choice at dysfunctional telomeres: NBN phosphorylation by CDK2 promotes non-homologous end joining repair at telomeres, while unphosphorylated NBN promotes microhomology-mediated end-joining (MMEJ) repair. Enhances AKT1 phosphorylation possibly by association with the mTORC2 complex. The protein is Nibrin of Mus musculus (Mouse).